Here is a 72-residue protein sequence, read N- to C-terminus: Protein P13 (72 aa).

It is found in the virion membrane. In Pseudomonas phage phi6 (Bacteriophage phi-6), this protein is Protein P13 (P13).